We begin with the raw amino-acid sequence, 429 residues long: Zinc-regulated GTPase metalloprotein activator 1 (429 aa).

Residues 15–22 carry the psi-PxLVp motif motif; that stretch reads GELPCLVT. 78 to 85 is a binding site for GTP; it reads GYLGSGKS. Positions 136, 138, and 139 each coordinate Zn(2+). Positions 136–139 match the CXCC motif motif; the sequence is CLCC. GTP-binding positions include 139-143 and 244-247; these read CSLKN and NKYD. The CobW C-terminal domain occupies 362-428; that stretch reads RDWEVQRTKG…SIEELLRKTL (67 aa).

The protein belongs to the SIMIBI class G3E GTPase family. ZNG1 subfamily.

The catalysed reaction is GTP + H2O = GDP + phosphate + H(+). Functionally, zinc chaperone that directly transfers zinc cofactor to target metalloproteins, thereby activating them. Catalyzes zinc insertion into the active site of methionine aminopeptidase MAP1, which function to cleave the initiator methionine from polypeptides during or after protein translation. Mechanistically, the N-terminal psi-PxLVp motif binds to the C6H2-type zinc finger of inactive form of MAP1. After formation of the docked complex, zinc is transferred from the CXCC motif in the GTPase domain of ZNG1 to the zinc binding site in the peptidase domain of MAP1 in a process requiring GTP hydrolysis. GTP/GDP exchange is required for release of active MAP1. The chain is Zinc-regulated GTPase metalloprotein activator 1 from Saccharomyces cerevisiae (strain ATCC 204508 / S288c) (Baker's yeast).